A 235-amino-acid chain; its full sequence is Large ribosomal subunit protein uL1 (235 aa).

This sequence belongs to the universal ribosomal protein uL1 family. Part of the 50S ribosomal subunit.

Functionally, binds directly to 23S rRNA. The L1 stalk is quite mobile in the ribosome, and is involved in E site tRNA release. Its function is as follows. Protein L1 is also a translational repressor protein, it controls the translation of the L11 operon by binding to its mRNA. The sequence is that of Large ribosomal subunit protein uL1 from Prochlorococcus marinus (strain MIT 9301).